The following is a 318-amino-acid chain: tRNA dimethylallyltransferase (318 aa).

16–23 (GPTASGKT) is an ATP binding site. 18–23 (TASGKT) contributes to the substrate binding site. 4 interaction with substrate tRNA regions span residues 41-44 (DSAL), 165-169 (QRINR), 246-251 (RCVGYR), and 279-286 (KRQITWLR).

It belongs to the IPP transferase family. Monomer. Mg(2+) serves as cofactor.

The enzyme catalyses adenosine(37) in tRNA + dimethylallyl diphosphate = N(6)-dimethylallyladenosine(37) in tRNA + diphosphate. Its function is as follows. Catalyzes the transfer of a dimethylallyl group onto the adenine at position 37 in tRNAs that read codons beginning with uridine, leading to the formation of N6-(dimethylallyl)adenosine (i(6)A). This Actinobacillus succinogenes (strain ATCC 55618 / DSM 22257 / CCUG 43843 / 130Z) protein is tRNA dimethylallyltransferase.